The sequence spans 139 residues: Nucleoside diphosphate kinase (139 aa).

6 residues coordinate ATP: Lys-11, Phe-59, Arg-87, Thr-93, Arg-104, and Asn-114. His-117 acts as the Pros-phosphohistidine intermediate in catalysis.

Belongs to the NDK family. As to quaternary structure, homotetramer. The cofactor is Mg(2+).

The protein localises to the cytoplasm. The enzyme catalyses a 2'-deoxyribonucleoside 5'-diphosphate + ATP = a 2'-deoxyribonucleoside 5'-triphosphate + ADP. It catalyses the reaction a ribonucleoside 5'-diphosphate + ATP = a ribonucleoside 5'-triphosphate + ADP. Major role in the synthesis of nucleoside triphosphates other than ATP. The ATP gamma phosphate is transferred to the NDP beta phosphate via a ping-pong mechanism, using a phosphorylated active-site intermediate. In Pasteurella multocida (strain Pm70), this protein is Nucleoside diphosphate kinase.